A 347-amino-acid chain; its full sequence is 3-isopropylmalate dehydrogenase (347 aa).

Residues R94, R104, R128, and D219 each contribute to the substrate site. D219, D243, and D247 together coordinate Mg(2+). Residue 279 to 291 (GSAPDIAGQGKAD) participates in NAD(+) binding.

The protein belongs to the isocitrate and isopropylmalate dehydrogenases family. LeuB type 2 subfamily. Homodimer. Mg(2+) serves as cofactor. Requires Mn(2+) as cofactor.

The protein localises to the cytoplasm. It carries out the reaction (2R,3S)-3-isopropylmalate + NAD(+) = 4-methyl-2-oxopentanoate + CO2 + NADH. It participates in amino-acid biosynthesis; L-leucine biosynthesis; L-leucine from 3-methyl-2-oxobutanoate: step 3/4. In terms of biological role, catalyzes the oxidation of 3-carboxy-2-hydroxy-4-methylpentanoate (3-isopropylmalate) to 3-carboxy-4-methyl-2-oxopentanoate. The product decarboxylates to 4-methyl-2 oxopentanoate. The polypeptide is 3-isopropylmalate dehydrogenase (Streptomyces coelicolor (strain ATCC BAA-471 / A3(2) / M145)).